Here is a 359-residue protein sequence, read N- to C-terminus: UDP-3-O-acylglucosamine N-acyltransferase (359 aa).

H253 (proton acceptor) is an active-site residue.

This sequence belongs to the transferase hexapeptide repeat family. LpxD subfamily. In terms of assembly, homotrimer.

The catalysed reaction is a UDP-3-O-[(3R)-3-hydroxyacyl]-alpha-D-glucosamine + a (3R)-hydroxyacyl-[ACP] = a UDP-2-N,3-O-bis[(3R)-3-hydroxyacyl]-alpha-D-glucosamine + holo-[ACP] + H(+). It functions in the pathway bacterial outer membrane biogenesis; LPS lipid A biosynthesis. Catalyzes the N-acylation of UDP-3-O-acylglucosamine using 3-hydroxyacyl-ACP as the acyl donor. Is involved in the biosynthesis of lipid A, a phosphorylated glycolipid that anchors the lipopolysaccharide to the outer membrane of the cell. The protein is UDP-3-O-acylglucosamine N-acyltransferase of Burkholderia lata (strain ATCC 17760 / DSM 23089 / LMG 22485 / NCIMB 9086 / R18194 / 383).